The sequence spans 158 residues: 6,7-dimethyl-8-ribityllumazine synthase (158 aa).

5-amino-6-(D-ribitylamino)uracil contacts are provided by residues Phe-23, 61-63, and 85-87; these read SFE and AVI. Position 90-91 (90-91) interacts with (2S)-2-hydroxy-3-oxobutyl phosphate; sequence ET. The active-site Proton donor is the His-93. 5-amino-6-(D-ribitylamino)uracil is bound at residue Phe-118. Residue Arg-132 participates in (2S)-2-hydroxy-3-oxobutyl phosphate binding.

It belongs to the DMRL synthase family.

It catalyses the reaction (2S)-2-hydroxy-3-oxobutyl phosphate + 5-amino-6-(D-ribitylamino)uracil = 6,7-dimethyl-8-(1-D-ribityl)lumazine + phosphate + 2 H2O + H(+). The protein operates within cofactor biosynthesis; riboflavin biosynthesis; riboflavin from 2-hydroxy-3-oxobutyl phosphate and 5-amino-6-(D-ribitylamino)uracil: step 1/2. Catalyzes the formation of 6,7-dimethyl-8-ribityllumazine by condensation of 5-amino-6-(D-ribitylamino)uracil with 3,4-dihydroxy-2-butanone 4-phosphate. This is the penultimate step in the biosynthesis of riboflavin. The protein is 6,7-dimethyl-8-ribityllumazine synthase of Prochlorococcus marinus (strain MIT 9301).